Consider the following 449-residue polypeptide: tRNA-2-methylthio-N(6)-dimethylallyladenosine synthase (449 aa).

One can recognise an MTTase N-terminal domain in the interval 3–124; that stretch reads KMLYIKTYGC…LPTMLEKLDS (122 aa). [4Fe-4S] cluster is bound by residues Cys12, Cys48, Cys87, Cys163, Cys167, and Cys170. A Radical SAM core domain is found at 149–380; that stretch reads KSPTVSGLVS…QAQLMLQQLE (232 aa). Residues 383-447 form the TRAM domain; sequence QKLIGKVVPV…ASSLFGEVCP (65 aa).

The protein belongs to the methylthiotransferase family. MiaB subfamily. In terms of assembly, monomer. Requires [4Fe-4S] cluster as cofactor.

It localises to the cytoplasm. The enzyme catalyses N(6)-dimethylallyladenosine(37) in tRNA + (sulfur carrier)-SH + AH2 + 2 S-adenosyl-L-methionine = 2-methylsulfanyl-N(6)-dimethylallyladenosine(37) in tRNA + (sulfur carrier)-H + 5'-deoxyadenosine + L-methionine + A + S-adenosyl-L-homocysteine + 2 H(+). Its function is as follows. Catalyzes the methylthiolation of N6-(dimethylallyl)adenosine (i(6)A), leading to the formation of 2-methylthio-N6-(dimethylallyl)adenosine (ms(2)i(6)A) at position 37 in tRNAs that read codons beginning with uridine. This chain is tRNA-2-methylthio-N(6)-dimethylallyladenosine synthase, found in Orientia tsutsugamushi (strain Boryong) (Rickettsia tsutsugamushi).